A 297-amino-acid chain; its full sequence is Adrenocorticotropic hormone receptor (297 aa).

Residues 1–23 (MKHIIHASGNVNGTARNNSDCPH) are Extracellular-facing. N-linked (GlcNAc...) asparagine glycans are attached at residues asparagine 12 and asparagine 17. Disulfide bonds link cysteine 21–cysteine 253 and cysteine 245–cysteine 251. Residues 24–49 (VALPEEIFFIISITGVLENLIIILAV) form a helical membrane-spanning segment. Residues 50–58 (IKNKNLQFP) are Cytoplasmic-facing. The helical transmembrane segment at 59 to 79 (MYFFICSLAISDMLGSLYKIL) threads the bilayer. Topologically, residues 80 to 104 (ESILIMFRNMGYFKPHGSFETTTDD) are extracellular. A helical transmembrane segment spans residues 105–126 (IIDTMFILSLLGSIFSLLAIAV). At 127–147 (DRYITIFHALQYHSIVTMHRT) the chain is on the cytoplasmic side. A helical transmembrane segment spans residues 148–168 (IAVLSIIWTFCIGSGITMVLF). Over 169–180 (SHHVPTVLTFTS) the chain is Extracellular. A helical membrane pass occupies residues 181–199 (LFPLMLVFILCLYVHMFLM). The Cytoplasmic portion of the chain corresponds to 200-217 (ARSHARNISTLPRGNMRG). A helical membrane pass occupies residues 218–244 (AITLTILLGVFIFCWAPFILHILLVTF). At 245 to 256 (CPNNPYCTCYIS) the chain is on the extracellular side. Residues 257–278 (LFHVNGMLIMCNAVIDPFIYAF) traverse the membrane as a helical segment. Residues 279–297 (RSPELRSAFRRMISYSKCL) are Cytoplasmic-facing. A lipid anchor (S-palmitoyl cysteine) is attached at cysteine 296.

It belongs to the G-protein coupled receptor 1 family. Homodimer. Interacts with corticotropin (ACTH). Interacts with MRAP; this interaction targets MC2R to the plasma membrane. Interacts with MRAP2; competing with MRAP for binding to MC2R and impairing the binding of corticotropin (ACTH). Ubiquitinated by MGRN1 that may be involved in post-endocytic trafficking and/or degradation of internalized receptor.

The protein localises to the cell membrane. Functionally, hormone receptor primarily expressed in adrenal cortex that plays a key role in regulating adrenocortical function. Upon corticotropin (ACTH) binding, facilitates the release of adrenal glucocorticoids, including cortisol and corticosterone. In addition, MC2R is required for fetal and neonatal adrenal gland development. Mechanistically, activates adenylate cyclase (cAMP), the MAPK cascade as well as the cAMP-dependent protein kinase A pathway leading to steroidogenic factor 1/NR5A1-mediated transcriptional activation. The protein is Adrenocorticotropic hormone receptor (MC2R) of Cavia porcellus (Guinea pig).